Consider the following 557-residue polypeptide: Carotenoid-cleaving dioxygenase, mitochondrial (557 aa).

Residues His-203, His-263, His-334, and His-551 each contribute to the Fe cation site.

The protein belongs to the carotenoid oxygenase family. The cofactor is Fe(2+).

It localises to the mitochondrion. The catalysed reaction is all-trans-beta-carotene + O2 = beta-ionone + all-trans-10'-apo-beta-carotenal. It catalyses the reaction 5-cis-lycopene + O2 = 5-cis-10'-apo-lycopenal + (3E,5E)-6,10-dimethylundeca-3,5,9-trien-2-one. The enzyme catalyses 13-cis-lycopene + O2 = 13-cis-10'-apo-lycopenal + (3E,5E)-6,10-dimethylundeca-3,5,9-trien-2-one. It carries out the reaction lutein + O2 = (3R,6R)-hydroxy-alpha-ionone + (3R)-3-hydroxy-10'-apo-beta-carotenal. The catalysed reaction is lutein + O2 = (3R,6R)-3-hydroxy-10'-apo-alpha-carotenal + (3R)-hydroxy-beta-ionone. It catalyses the reaction all-trans-zeaxanthin + 2 O2 = 4,9-dimethyldodeca-2,4,6,8,10-pentaenedial + 2 (3R)-hydroxy-beta-ionone. The enzyme catalyses all-trans-zeaxanthin + O2 = (3R)-3-hydroxy-10'-apo-beta-carotenal + (3R)-hydroxy-beta-ionone. It carries out the reaction beta-cryptoxanthin + O2 = all-trans-10'-apo-beta-carotenal + (3R)-hydroxy-beta-ionone. The catalysed reaction is all-trans-10'-apo-beta-carotenal + O2 = beta-ionone + 4,9-dimethyldodeca-2,4,6,8,10-pentaenedial. It catalyses the reaction (3R)-3-hydroxy-10'-apo-beta-carotenal + O2 = 4,9-dimethyldodeca-2,4,6,8,10-pentaenedial + (3R)-hydroxy-beta-ionone. The enzyme catalyses (3R,6R)-3-hydroxy-10'-apo-alpha-carotenal + O2 = (3R,6R)-hydroxy-alpha-ionone + 4,9-dimethyldodeca-2,4,6,8,10-pentaenedial. Its function is as follows. Broad specificity mitochondrial dioxygenase that mediates the asymmetric oxidative cleavage of carotenoids. Cleaves carotenes (pure hydrocarbon carotenoids) such as all-trans-beta-carotene and lycopene as well as xanthophylls (oxygenated carotenoids) such as zeaxanthin, lutein and beta-cryptoxanthin at both the 9,10 and the 9',10' carbon-carbon double bond. Through its function in carotenoids metabolism regulates oxidative stress and the production of important signaling molecules. The chain is Carotenoid-cleaving dioxygenase, mitochondrial from Pongo abelii (Sumatran orangutan).